The chain runs to 348 residues: Phosphatidylglycerophosphate phosphatase 1, chloroplastic/mitochondrial (348 aa).

The N-terminal 58 residues, 1–58, are a transit peptide targeting the chloroplast and mitochondrion; sequence MQTPSMAASTTSYYPIPKSFLLSPPRHKRNPNLISCSTKPICSPPPPSSSSSSPLQTT. Residues 17–67 are disordered; that stretch reads PKSFLLSPPRHKRNPNLISCSTKPICSPPPPSSSSSSPLQTTTTHRSQKQN. The segment covering 55–67 has biased composition (polar residues); sequence LQTTTTHRSQKQN. The Phosphoryl acceptor signature appears at 184-188; sequence DKDNT.

This sequence belongs to the HAD-like hydrolase superfamily. Mg(2+) serves as cofactor. Mainly expressed in inflorescences (especially in pollen) and, to a lower extent, in leaves, stems and siliques, as well as, at low levels, in roots. Mostly expressed in hypocotyl, vasculatures, trichomes, guard cells and stigmas.

It localises to the plastid. It is found in the chloroplast. The protein localises to the mitochondrion. The enzyme catalyses a 1,2-diacyl-sn-glycero-3-phospho-(1'-sn-glycero-3'-phosphate) + H2O = a 1,2-diacyl-sn-glycero-3-phospho-(1'-sn-glycerol) + phosphate. It functions in the pathway phospholipid metabolism; phosphatidylglycerol biosynthesis; phosphatidylglycerol from CDP-diacylglycerol: step 2/2. Its function is as follows. Phosphatidylglycerophosphate (PGP) phosphatase involved in the biosynthesis of phosphatidylglycerol (PG), a phosphoglycerolipid predominantly present in chloroplastic thylakoid membranes and which has important photosynthetic function; seems to use PGP 34:3, PGP 34:2 and PGP 34:1 as substrates. Required for thylakoid membranes development and chloroplast function. Necessary for normal cell growth. Required for root growth and columella cells organization. This is Phosphatidylglycerophosphate phosphatase 1, chloroplastic/mitochondrial from Arabidopsis thaliana (Mouse-ear cress).